We begin with the raw amino-acid sequence, 186 residues long: MNVSKYVAIFSFVFIQLISVGKVFANADEWMTTFRENIVQTWQQPEHYDLYIPAITWHARFAYDKEKTDRYNERPWGGGFGLSRWDEKGNWHGLYAMAFKDSWNKWEPIAGYGWESTWRPLADENFHLGLGFTAGVTARDNWNYIPLPVLLPLASVGYGPVTFQMTYIPGTYNNGNVYFAWMRFQF.

The signal sequence occupies residues 1 to 25 (MNVSKYVAIFSFVFIQLISVGKVFA). Residues H58, D101, and S102 contribute to the active site.

Belongs to the lipid A palmitoyltransferase family. As to quaternary structure, homodimer.

The protein resides in the cell outer membrane. The catalysed reaction is lipid A (E. coli) + a 1-hexadecanoyl-2-acyl-sn-glycero-3-phosphocholine = hepta-acyl lipid A (E. coli) + a 2-acyl-sn-glycero-3-phosphocholine. The enzyme catalyses lipid IIA + a 1-hexadecanoyl-2-acyl-sn-glycero-3-phosphocholine = lipid IIB + a 2-acyl-sn-glycero-3-phosphocholine. It catalyses the reaction lipid IVA (E. coli) + a 1-hexadecanoyl-2-acyl-sn-glycero-3-phosphocholine = lipid IVB (E. coli) + a 2-acyl-sn-glycero-3-phosphocholine. Its function is as follows. Transfers a palmitate residue from the sn-1 position of a phospholipid to the N-linked hydroxymyristate on the proximal unit of lipid A or its precursors. The protein is Lipid A palmitoyltransferase PagP of Escherichia coli O157:H7.